A 4080-amino-acid polypeptide reads, in one-letter code: Hybrid PKS-NRPS synthetase poxE (4080 aa).

A Ketosynthase family 3 (KS3) domain is found at 8–442 (REPIAIVGSG…GTNAHAIIEA (435 aa)). Residues cysteine 181, histidine 320, and histidine 362 each act as for beta-ketoacyl synthase activity in the active site. The interval 554-878 (VFTGQGAQWA…QRGMNDVEAM (325 aa)) is malonyl-CoA:ACP transacylase (MAT) domain. The segment at 944-1078 (HPILGTRCPD…GRLVITYGPV (135 aa)) is N-terminal hotdog fold. The PKS/mFAS DH domain maps to 944–1246 (HPILGTRCPD…AVPLEATNAD (303 aa)). The tract at residues 945-1243 (PILGTRCPDG…GIHAVPLEAT (299 aa)) is dehydratase (DH) domain. The Proton acceptor; for dehydratase activity role is filled by histidine 976. The interval 1093-1246 (MVDVPSERFY…AVPLEATNAD (154 aa)) is C-terminal hotdog fold. Aspartate 1152 serves as the catalytic Proton donor; for dehydratase activity. Residues 1400-1585 (HFSDYLASVV…GVDTFTSDAD (186 aa)) are methyltransferase (MT) domain. The tract at residues 2118–2292 (TYWLVGLTGS…AGSVMNIGAI (175 aa)) is ketoreductase (KR)domain. A peptidyl carrier protein region spans residues 2399 to 2478 (TTDEIYEVIK…TIGEIIKFVL (80 aa)). Positions 2405-2481 (EVIKECFIVK…EIIKFVLEKL (77 aa)) constitute a Carrier 1 domain. The residue at position 2441 (serine 2441) is an O-(pantetheine 4'-phosphoryl)serine. The interval 2488–2569 (SLGLSPPTGA…AASPSIHTEE (82 aa)) is disordered. Over residues 2511 to 2525 (VVVERRNVPRLEKKI) the composition is skewed to basic and acidic residues. Positions 2528–2545 (SAGSRTSSSVTGTSKSVS) are enriched in low complexity. Residues 2551–2565 (DTASSQTSEAASPSI) show a composition bias toward polar residues. Residues 2607–3036 (KEPLSFGQSR…DSKQPGGHVS (430 aa)) are condensation. The adenylation stretch occupies residues 3069–3478 (DMAKQYPQKL…DGRLRIEGRI (410 aa)). The region spanning 3593-3673 (AHLNEAQAQM…KMALLIKPQE (81 aa)) is the Carrier 2 domain. The thiolation stretch occupies residues 3598-3670 (AQAQMVQLWE…TLEKMALLIK (73 aa)). An O-(pantetheine 4'-phosphoryl)serine modification is found at serine 3633. Positions 3740–3959 (LTGATGFIGQ…DFVPVEQVVR (220 aa)) are reductase (RED) domain.

It in the C-terminal section; belongs to the NRP synthetase family.

It participates in secondary metabolite biosynthesis. Hybrid PKS-NRPS synthetase; part of the gene cluster that mediates the biosynthesis of oxaleimides, cytotoxic compounds containing an unusual disubstituted succinimide moiety. The first step of the pathway is provided by the HR-PKS poxF that serves in a new mode of collaborative biosynthesis with the PKS-NRPS poxE, by providing the olefin containing amino acid substrate via the synthesis of an ACP-bound dec-4-enoate. The cytochrome P450 monooxygenase poxM-catalyzed oxidation at the alpha-position creates the enzyme-bound 2-hydroxydec-4-enoyl-ACP thioester, which may be prone to spontaneous hydrolysis to yield 2-hydroxydec-4-enoic acid due to increased electrophilicity of the carbonyl. 2-hydroxydec-4-enoic acid can then be further oxidized by poxM to yield the alpha-ketoacid 2-oxodec-4-enoicacid, which is reductively aminated by the aminotransferase poxL to yield (S,E)-2-aminodec-4-enoic acid. The Hybrid PKS-NRPS synthetase poxE then performs condensation between the octaketide product of its PKS modules and the amino group of (S,E)-2-aminodec-4-enoic acid which is activated and incorporated by the adenylation domain. The resulting aminoacyl product can be cyclized by the Diels-Alderase PoxQ and reductively released by the reductive (R) domain of poxE to yield an aldehyde intermediate. The released aldehyde is then substrate for a Knoevenagel condensation by the hydrolyase poxO followed by an oxidation at the 5-position of the pyrrolidone ring. The presence of the olefin from the amino acid building block allows for migration of the substituted allyl group to occur. This allylic transposition reaction takes place in a conjugate addition, semipinacol-like fashion to yield a succinimide intermediate. Iterative two-electron oxidations of the C7 methyl of the succinimide intermediate to the carboxylic acid can be catalyzed by one of two remaining cytochrome P450 monooxygenasess poxC or poxD to yield oxaleimide A. Subsequent oxidation yields the maleimide scaffold oxaleimide I. Both oxaleimide A and oxaleimide I can undergo oxidative modifications in the decalin ring to yield the series of products oxaleimides B to H. This chain is Hybrid PKS-NRPS synthetase poxE, found in Penicillium oxalicum (strain 114-2 / CGMCC 5302) (Penicillium decumbens).